We begin with the raw amino-acid sequence, 381 residues long: Queuine tRNA-ribosyltransferase (381 aa).

D96 serves as the catalytic Proton acceptor. Residues 96–100 (DSGGF), D150, Q193, and G220 each bind substrate. The tract at residues 251–257 (GVGSPDS) is RNA binding. D270 (nucleophile) is an active-site residue. An RNA binding; important for wobble base 34 recognition region spans residues 275-279 (TRIAR). Residues C308, C310, C313, and H339 each coordinate Zn(2+).

This sequence belongs to the queuine tRNA-ribosyltransferase family. As to quaternary structure, homodimer. Within each dimer, one monomer is responsible for RNA recognition and catalysis, while the other monomer binds to the replacement base PreQ1. Zn(2+) is required as a cofactor.

The enzyme catalyses 7-aminomethyl-7-carbaguanine + guanosine(34) in tRNA = 7-aminomethyl-7-carbaguanosine(34) in tRNA + guanine. Its pathway is tRNA modification; tRNA-queuosine biosynthesis. Functionally, catalyzes the base-exchange of a guanine (G) residue with the queuine precursor 7-aminomethyl-7-deazaguanine (PreQ1) at position 34 (anticodon wobble position) in tRNAs with GU(N) anticodons (tRNA-Asp, -Asn, -His and -Tyr). Catalysis occurs through a double-displacement mechanism. The nucleophile active site attacks the C1' of nucleotide 34 to detach the guanine base from the RNA, forming a covalent enzyme-RNA intermediate. The proton acceptor active site deprotonates the incoming PreQ1, allowing a nucleophilic attack on the C1' of the ribose to form the product. After dissociation, two additional enzymatic reactions on the tRNA convert PreQ1 to queuine (Q), resulting in the hypermodified nucleoside queuosine (7-(((4,5-cis-dihydroxy-2-cyclopenten-1-yl)amino)methyl)-7-deazaguanosine). The protein is Queuine tRNA-ribosyltransferase of Lysinibacillus sphaericus (strain C3-41).